Here is a 153-residue protein sequence, read N- to C-terminus: 3-hydroxyacyl-[acyl-carrier-protein] dehydratase FabZ (153 aa).

The active site involves His57.

It belongs to the thioester dehydratase family. FabZ subfamily.

It is found in the cytoplasm. The catalysed reaction is a (3R)-hydroxyacyl-[ACP] = a (2E)-enoyl-[ACP] + H2O. Functionally, involved in unsaturated fatty acids biosynthesis. Catalyzes the dehydration of short chain beta-hydroxyacyl-ACPs and long chain saturated and unsaturated beta-hydroxyacyl-ACPs. This chain is 3-hydroxyacyl-[acyl-carrier-protein] dehydratase FabZ, found in Vibrio cholerae serotype O1 (strain ATCC 39315 / El Tor Inaba N16961).